The chain runs to 269 residues: Phosphate import ATP-binding protein PstB 2 (269 aa).

Residues 23–264 (LEVKDLSIYY…PKKQKTEDYI (242 aa)) form the ABC transporter domain. Residue 55–62 (GPSGCGKS) participates in ATP binding.

It belongs to the ABC transporter superfamily. Phosphate importer (TC 3.A.1.7) family. The complex is composed of two ATP-binding proteins (PstB), two transmembrane proteins (PstC and PstA) and a solute-binding protein (PstS).

It is found in the cell membrane. The catalysed reaction is phosphate(out) + ATP + H2O = ADP + 2 phosphate(in) + H(+). In terms of biological role, part of the ABC transporter complex PstSACB involved in phosphate import. Responsible for energy coupling to the transport system. The chain is Phosphate import ATP-binding protein PstB 2 from Bacillus subtilis (strain 168).